The sequence spans 428 residues: Light-independent protochlorophyllide reductase subunit N (428 aa).

[4Fe-4S] cluster contacts are provided by Cys31, Cys56, and Cys117.

It belongs to the BchN/ChlN family. Protochlorophyllide reductase is composed of three subunits; BchL, BchN and BchB. Forms a heterotetramer of two BchB and two BchN subunits. Requires [4Fe-4S] cluster as cofactor.

It carries out the reaction chlorophyllide a + oxidized 2[4Fe-4S]-[ferredoxin] + 2 ADP + 2 phosphate = protochlorophyllide a + reduced 2[4Fe-4S]-[ferredoxin] + 2 ATP + 2 H2O. Its pathway is porphyrin-containing compound metabolism; bacteriochlorophyll biosynthesis (light-independent). Component of the dark-operative protochlorophyllide reductase (DPOR) that uses Mg-ATP and reduced ferredoxin to reduce ring D of protochlorophyllide (Pchlide) to form chlorophyllide a (Chlide). This reaction is light-independent. The NB-protein (BchN-BchB) is the catalytic component of the complex. This chain is Light-independent protochlorophyllide reductase subunit N, found in Rhodopseudomonas palustris (strain BisB18).